The sequence spans 195 residues: Imidazoleglycerol-phosphate dehydratase (195 aa).

The protein belongs to the imidazoleglycerol-phosphate dehydratase family.

The protein localises to the cytoplasm. The enzyme catalyses D-erythro-1-(imidazol-4-yl)glycerol 3-phosphate = 3-(imidazol-4-yl)-2-oxopropyl phosphate + H2O. Its pathway is amino-acid biosynthesis; L-histidine biosynthesis; L-histidine from 5-phospho-alpha-D-ribose 1-diphosphate: step 6/9. The sequence is that of Imidazoleglycerol-phosphate dehydratase from Methylorubrum extorquens (strain CM4 / NCIMB 13688) (Methylobacterium extorquens).